Reading from the N-terminus, the 126-residue chain is uncharacterized protein (126 aa).

The signal sequence occupies residues 1–24; that stretch reads MKMTKLATLFLTATLSLASGAALA. Over residues 27-47 the composition is skewed to low complexity; the sequence is SGAQTNNGQANAAADAGQVAP. The tract at residues 27-126 is disordered; the sequence is SGAQTNNGQA…VDTKTDGTTQ (100 aa). Over residues 54–64 the composition is skewed to polar residues; sequence APNNVDNNGVN. Basic and acidic residues-rich tracts occupy residues 84 to 105 and 117 to 126; these read MTKDEEHKNTMCKDGRCPDINK and VDTKTDGTTQ.

This is an uncharacterized protein from Shigella flexneri.